The primary structure comprises 688 residues: Zinc finger protein 770 (688 aa).

Residue Lys11 forms a Glycyl lysine isopeptide (Lys-Gly) (interchain with G-Cter in SUMO2) linkage. C2H2-type zinc fingers lie at residues 27 to 49 (YVCN…YLIH), 55 to 77 (FECD…QLTH), and 81 to 103 (FKCS…QQLH). Residues Lys112, Lys121, and Lys146 each participate in a glycyl lysine isopeptide (Lys-Gly) (interchain with G-Cter in SUMO2) cross-link. 3 consecutive C2H2-type zinc fingers follow at residues 160–182 (HACT…VLIH), 188–210 (FKCV…QLTH), and 216–238 (FQCC…KQIH). Residue Lys262 forms a Glycyl lysine isopeptide (Lys-Gly) (interchain with G-Cter in SUMO2) linkage. The C2H2-type 7; degenerate zinc finger occupies 294–318 (FQCPKCEKCFESEQILNEHSCFPAR). Glycyl lysine isopeptide (Lys-Gly) (interchain with G-Cter in SUMO2) cross-links involve residues Lys420 and Lys437. C2H2-type zinc fingers lie at residues 475–497 (CPCD…YLIH), 503–525 (FGCN…EQTH), 623–645 (YRCS…YLIH), and 651–673 (FECS…QLTH). A Glycyl lysine isopeptide (Lys-Gly) (interchain with G-Cter in SUMO2) cross-link involves residue Lys681.

This sequence belongs to the krueppel C2H2-type zinc-finger protein family.

It localises to the nucleus. Its function is as follows. May be involved in transcriptional regulation. This chain is Zinc finger protein 770 (ZNF770), found in Pongo abelii (Sumatran orangutan).